The following is a 308-amino-acid chain: Oxygen-dependent coproporphyrinogen-III oxidase (308 aa).

Residue S100 coordinates substrate. The a divalent metal cation site is built by H104 and H114. H114 (proton donor) is an active-site residue. 116–118 (NFR) lines the substrate pocket. A divalent metal cation is bound by residues H153 and H183. The interval 248–283 (YVEFNLVFDRGTIFGLQSGGRTESILSSMPPMATWK) is important for dimerization. A substrate-binding site is contributed by 266 to 268 (GGR).

The protein belongs to the aerobic coproporphyrinogen-III oxidase family. As to quaternary structure, homodimer. Requires a divalent metal cation as cofactor.

The protein localises to the cytoplasm. It carries out the reaction coproporphyrinogen III + O2 + 2 H(+) = protoporphyrinogen IX + 2 CO2 + 2 H2O. Its pathway is porphyrin-containing compound metabolism; protoporphyrin-IX biosynthesis; protoporphyrinogen-IX from coproporphyrinogen-III (O2 route): step 1/1. In terms of biological role, involved in the heme biosynthesis. Catalyzes the aerobic oxidative decarboxylation of propionate groups of rings A and B of coproporphyrinogen-III to yield the vinyl groups in protoporphyrinogen-IX. This Francisella tularensis subsp. holarctica (strain FTNF002-00 / FTA) protein is Oxygen-dependent coproporphyrinogen-III oxidase.